An 88-amino-acid polypeptide reads, in one-letter code: Protein K3 (88 aa).

Residues 8-82 enclose the S1 motif domain; it reads LPNAGDVIKG…TKGYIDVNYK (75 aa). Binding to host EIF2AK2/PKR stretches follow at residues 43 to 53 and 74 to 79; these read SVKMHMDRYVE and KGYIDV.

Belongs to the poxviridae K3 protein family. Interacts with host EIF2AK2/PKR kinase.

In terms of biological role, viral mimic of EIF2S1/eIF-2alpha that acts as a pseudosubstrate for EIF2AK2/PKR kinase. Inhibits therefore EIF2S1/eIF-2alpha phosphorylation by host EIF2AK2/PKR kinase and prevents protein synthesis shutoff. Determinant of host species specificity. In Vaccinia virus (strain Western Reserve) (VACV), this protein is Protein K3.